The primary structure comprises 482 residues: tRNA sulfurtransferase (482 aa).

A THUMP domain is found at 61–165; that stretch reads LAIRDALTRI…DDRLLLIKGR (105 aa). ATP-binding positions include 183–184, Lys-265, Gly-287, and Gln-296; that span reads LI. Cys-344 and Cys-456 form a disulfide bridge. In terms of domain architecture, Rhodanese spans 404–482; sequence FGPNDVILDI…GFNNVKVYRP (79 aa). Cys-456 acts as the Cysteine persulfide intermediate in catalysis.

Belongs to the ThiI family.

Its subcellular location is the cytoplasm. The enzyme catalyses [ThiI sulfur-carrier protein]-S-sulfanyl-L-cysteine + a uridine in tRNA + 2 reduced [2Fe-2S]-[ferredoxin] + ATP + H(+) = [ThiI sulfur-carrier protein]-L-cysteine + a 4-thiouridine in tRNA + 2 oxidized [2Fe-2S]-[ferredoxin] + AMP + diphosphate. It catalyses the reaction [ThiS sulfur-carrier protein]-C-terminal Gly-Gly-AMP + S-sulfanyl-L-cysteinyl-[cysteine desulfurase] + AH2 = [ThiS sulfur-carrier protein]-C-terminal-Gly-aminoethanethioate + L-cysteinyl-[cysteine desulfurase] + A + AMP + 2 H(+). It participates in cofactor biosynthesis; thiamine diphosphate biosynthesis. Catalyzes the ATP-dependent transfer of a sulfur to tRNA to produce 4-thiouridine in position 8 of tRNAs, which functions as a near-UV photosensor. Also catalyzes the transfer of sulfur to the sulfur carrier protein ThiS, forming ThiS-thiocarboxylate. This is a step in the synthesis of thiazole, in the thiamine biosynthesis pathway. The sulfur is donated as persulfide by IscS. The chain is tRNA sulfurtransferase from Escherichia coli O8 (strain IAI1).